The following is a 136-amino-acid chain: Peptide methionine sulfoxide reductase MsrB (136 aa).

In terms of domain architecture, MsrB spans 6–128 (EVSLYKELTD…NSAALSFTDE (123 aa)). 4 residues coordinate Zn(2+): cysteine 45, cysteine 48, cysteine 94, and cysteine 97. Cysteine 117 serves as the catalytic Nucleophile.

It belongs to the MsrB Met sulfoxide reductase family. Zn(2+) serves as cofactor.

The enzyme catalyses L-methionyl-[protein] + [thioredoxin]-disulfide + H2O = L-methionyl-(R)-S-oxide-[protein] + [thioredoxin]-dithiol. This chain is Peptide methionine sulfoxide reductase MsrB, found in Photorhabdus laumondii subsp. laumondii (strain DSM 15139 / CIP 105565 / TT01) (Photorhabdus luminescens subsp. laumondii).